The primary structure comprises 284 residues: RAD52 motif-containing protein 1 (284 aa).

Residues 1–92 (MAELVPFAVP…KQLFQKSPVK (92 aa)) are necessary for nuclear localization and for nucleolar accumulation in response to heat shock. The region spanning 15 to 98 (KTLLVWELSS…SPVKVRLGTR (84 aa)) is the RRM domain. Residues 90–133 (PVKVRLGTRHKAVQHQALALNSSRCQELANYYFGFNGWSKRIIK) are necessary for nuclear and nucleolar localization.

Homodimer.

It localises to the nucleus. The protein localises to the cytoplasm. It is found in the nucleolus. The protein resides in the cajal body. Its subcellular location is the PML body. May confer resistance to the antitumor agent cisplatin. Binds to DNA and RNA. The protein is RAD52 motif-containing protein 1 (RDM1) of Macaca fascicularis (Crab-eating macaque).